Consider the following 266-residue polypeptide: GTP cyclohydrolase FolE2 (266 aa).

The protein belongs to the GTP cyclohydrolase IV family.

It carries out the reaction GTP + H2O = 7,8-dihydroneopterin 3'-triphosphate + formate + H(+). Its pathway is cofactor biosynthesis; 7,8-dihydroneopterin triphosphate biosynthesis; 7,8-dihydroneopterin triphosphate from GTP: step 1/1. Converts GTP to 7,8-dihydroneopterin triphosphate. This Syntrophotalea carbinolica (strain DSM 2380 / NBRC 103641 / GraBd1) (Pelobacter carbinolicus) protein is GTP cyclohydrolase FolE2.